The primary structure comprises 605 residues: Apoptosis-inducing factor 3 (605 aa).

Positions 18 to 29 (VLPEKERGKEEL) are enriched in basic and acidic residues. The disordered stretch occupies residues 18 to 44 (VLPEKERGKEELSASGKGSPRGYQGNG). The Rieske domain maps to 70–165 (ATVCHVKDLE…VKIEKEKVTI (96 aa)). [2Fe-2S] cluster is bound by residues C109, H111, C128, and H131. FAD-binding positions include 201 to 205 (GAGAA), R235, K240, V270, D467, and W514.

The protein belongs to the FAD-dependent oxidoreductase family.

The protein localises to the mitochondrion. Functionally, induces apoptosis through a caspase dependent pathway. Reduces mitochondrial membrane potential. In Mus musculus (Mouse), this protein is Apoptosis-inducing factor 3 (Aifm3).